Reading from the N-terminus, the 313-residue chain is Ribosomal RNA small subunit methyltransferase H (313 aa).

S-adenosyl-L-methionine-binding positions include 35–37 (GGH), D55, F79, D101, and Q108.

Belongs to the methyltransferase superfamily. RsmH family.

It localises to the cytoplasm. The enzyme catalyses cytidine(1402) in 16S rRNA + S-adenosyl-L-methionine = N(4)-methylcytidine(1402) in 16S rRNA + S-adenosyl-L-homocysteine + H(+). In terms of biological role, specifically methylates the N4 position of cytidine in position 1402 (C1402) of 16S rRNA. In Escherichia coli O6:H1 (strain CFT073 / ATCC 700928 / UPEC), this protein is Ribosomal RNA small subunit methyltransferase H.